A 364-amino-acid polypeptide reads, in one-letter code: Methylthioribose-1-phosphate isomerase (364 aa).

The active-site Proton donor is Asp254.

Belongs to the eIF-2B alpha/beta/delta subunits family. MtnA subfamily.

The protein localises to the cytoplasm. It localises to the nucleus. The enzyme catalyses 5-(methylsulfanyl)-alpha-D-ribose 1-phosphate = 5-(methylsulfanyl)-D-ribulose 1-phosphate. The protein operates within amino-acid biosynthesis; L-methionine biosynthesis via salvage pathway; L-methionine from S-methyl-5-thio-alpha-D-ribose 1-phosphate: step 1/6. Its function is as follows. Catalyzes the interconversion of methylthioribose-1-phosphate (MTR-1-P) into methylthioribulose-1-phosphate (MTRu-1-P). This chain is Methylthioribose-1-phosphate isomerase, found in Drosophila simulans (Fruit fly).